The following is a 339-amino-acid chain: Holliday junction branch migration complex subunit RuvB (339 aa).

Positions 1–180 (MTRTITPDMT…FGVISRLEFY (180 aa)) are large ATPase domain (RuvB-L). ATP is bound by residues L19, R20, G61, K64, T65, T66, 127–129 (EDF), R170, Y180, and R217. T65 is a Mg(2+) binding site. The interval 181–251 (TIEELAFIIT…VVQDALALLE (71 aa)) is small ATPAse domain (RuvB-S). The head domain (RuvB-H) stretch occupies residues 254 to 339 (HMGFDYMDRM…EPPQGKLFQD (86 aa)). R309 and R314 together coordinate DNA.

It belongs to the RuvB family. In terms of assembly, homohexamer. Forms an RuvA(8)-RuvB(12)-Holliday junction (HJ) complex. HJ DNA is sandwiched between 2 RuvA tetramers; dsDNA enters through RuvA and exits via RuvB. An RuvB hexamer assembles on each DNA strand where it exits the tetramer. Each RuvB hexamer is contacted by two RuvA subunits (via domain III) on 2 adjacent RuvB subunits; this complex drives branch migration. In the full resolvosome a probable DNA-RuvA(4)-RuvB(12)-RuvC(2) complex forms which resolves the HJ.

It localises to the cytoplasm. It catalyses the reaction ATP + H2O = ADP + phosphate + H(+). Its function is as follows. The RuvA-RuvB-RuvC complex processes Holliday junction (HJ) DNA during genetic recombination and DNA repair, while the RuvA-RuvB complex plays an important role in the rescue of blocked DNA replication forks via replication fork reversal (RFR). RuvA specifically binds to HJ cruciform DNA, conferring on it an open structure. The RuvB hexamer acts as an ATP-dependent pump, pulling dsDNA into and through the RuvAB complex. RuvB forms 2 homohexamers on either side of HJ DNA bound by 1 or 2 RuvA tetramers; 4 subunits per hexamer contact DNA at a time. Coordinated motions by a converter formed by DNA-disengaged RuvB subunits stimulates ATP hydrolysis and nucleotide exchange. Immobilization of the converter enables RuvB to convert the ATP-contained energy into a lever motion, pulling 2 nucleotides of DNA out of the RuvA tetramer per ATP hydrolyzed, thus driving DNA branch migration. The RuvB motors rotate together with the DNA substrate, which together with the progressing nucleotide cycle form the mechanistic basis for DNA recombination by continuous HJ branch migration. Branch migration allows RuvC to scan DNA until it finds its consensus sequence, where it cleaves and resolves cruciform DNA. This is Holliday junction branch migration complex subunit RuvB from Geotalea daltonii (strain DSM 22248 / JCM 15807 / FRC-32) (Geobacter daltonii).